We begin with the raw amino-acid sequence, 1380 residues long: DNA-directed RNA polymerase subunit beta (1380 aa).

It belongs to the RNA polymerase beta chain family. In terms of assembly, the RNAP catalytic core consists of 2 alpha, 1 beta, 1 beta' and 1 omega subunit. When a sigma factor is associated with the core the holoenzyme is formed, which can initiate transcription.

It carries out the reaction RNA(n) + a ribonucleoside 5'-triphosphate = RNA(n+1) + diphosphate. DNA-dependent RNA polymerase catalyzes the transcription of DNA into RNA using the four ribonucleoside triphosphates as substrates. The chain is DNA-directed RNA polymerase subunit beta from Ehrlichia ruminantium (strain Welgevonden).